Here is a 328-residue protein sequence, read N- to C-terminus: Isopenicillin N synthase (328 aa).

Positions 85, 89, 181, and 187 each coordinate isopenicillin N. N-[(5S)-5-amino-5-carboxypentanoyl]-L-cysteinyl-D-valine is bound by residues Arg-85, Tyr-89, Ser-181, Tyr-187, His-210, and Asp-212. One can recognise a Fe2OG dioxygenase domain in the interval 178–284 (TLSSVSLIRY…RLSLPFFFHA (107 aa)). Fe(2+) is bound by residues His-210, Asp-212, and His-266. Arg-275 is a binding site for 2-oxoglutarate. Isopenicillin N is bound at residue Ser-277. Ser-277 contacts N-[(5S)-5-amino-5-carboxypentanoyl]-L-cysteinyl-D-valine.

This sequence belongs to the iron/ascorbate-dependent oxidoreductase family. The cofactor is Fe cation. L-ascorbate serves as cofactor.

The enzyme catalyses N-[(5S)-5-amino-5-carboxypentanoyl]-L-cysteinyl-D-valine + O2 = isopenicillin N + 2 H2O. It functions in the pathway antibiotic biosynthesis; penicillin G biosynthesis; penicillin G from L-alpha-aminoadipate and L-cysteine and L-valine: step 2/3. Its function is as follows. Removes, in the presence of oxygen, 4 hydrogen atoms from delta-L-(alpha-aminoadipyl)-L-cysteinyl-D-valine (ACV) to form the azetidinone and thiazolidine rings of isopenicillin. This chain is Isopenicillin N synthase (pcbC), found in Amycolatopsis lactamdurans (Nocardia lactamdurans).